A 372-amino-acid polypeptide reads, in one-letter code: BTB/POZ and TAZ domain-containing protein 4 (372 aa).

The disordered stretch occupies residues Ser14–Leu37. One can recognise a BTB domain in the interval Ala60–Glu128. The TAZ-type zinc-finger motif lies at Arg238–Arg330. Residues Lys341–Pro364 are caM-binding.

Interacts with GTE11/BET10 through the BTB domain. As to expression, preferentially expressed in leaves, stems and flowers.

The protein resides in the cytoplasm. It participates in protein modification; protein ubiquitination. Its function is as follows. May act as a substrate-specific adapter of an E3 ubiquitin-protein ligase complex (CUL3-RBX1-BTB) which mediates the ubiquitination and subsequent proteasomal degradation of target proteins. The chain is BTB/POZ and TAZ domain-containing protein 4 (BT4) from Arabidopsis thaliana (Mouse-ear cress).